The sequence spans 302 residues: TALHKMEDFTFDGTKRLSVNYVKGILQPTVTCDIWDEIWNFQAKPDDLLISTYPKAGTTWTQEIVELIQNEGDVEKSKRAPTHQRFPFLEWKIPSLGSGLEQAQAMPSPRILKTHLPFHLLPPSFLEKNCKIIYVARNPKDNMVSYYHFQRMNKALPDPGTWEEYFETFLAGKVCWGSWHEHVKGWWEAKDKHRILYLFYEDMKKNPKHEVQKLTEFIEKKLDDKVLDKIVHYTSFDVMKQNSMANYSSIPAEIMDHSISPFMRKGAVGDWKKHFTVAQNERFDEDYKKKMADTRLTFHFQF.

55 to 60 is a 3'-phosphoadenylyl sulfate binding site; that stretch reads KAGTTW. A substrate-binding site is contributed by 113–115; the sequence is KTH. His115 functions as the Proton acceptor in the catalytic mechanism. 3'-phosphoadenylyl sulfate is bound by residues Arg137, Ser145, Tyr200, 234 to 239, and 262 to 266; these read TSFDVM and FMRKG.

This sequence belongs to the sulfotransferase 1 family. In terms of tissue distribution, expressed in liver, kidney and jejunum.

It localises to the cytoplasm. The protein localises to the cytosol. It catalyses the reaction a phenol + 3'-phosphoadenylyl sulfate = an aryl sulfate + adenosine 3',5'-bisphosphate + H(+). The catalysed reaction is 17beta-estradiol + 3'-phosphoadenylyl sulfate = 17beta-estradiol 3-sulfate + adenosine 3',5'-bisphosphate + H(+). It carries out the reaction bisphenol A + 3'-phosphoadenylyl sulfate = bisphenyl A sulfate + adenosine 3',5'-bisphosphate + H(+). Functionally, sulfotransferase that utilizes 3'-phospho-5'-adenylyl sulfate (PAPS) as sulfonate donor to catalyze the sulfate conjugation of phenolic compounds and estrogen (E2). Can also sulfonate estrogenic compounds, however, the dietary flavonoids (phytoestrogen) and environmental estrogens, like bisphenol A are better substrates than 17beta-estradiol (E2). This chain is Sulfotransferase 1C4 (SULT1C4), found in Macaca fascicularis (Crab-eating macaque).